The sequence spans 84 residues: MSILSFLLGEKKKTASVAKERLQIILAHERSSHSAPADYLPALQRELVAVISKYVKIGNDDIKVNLERQDNLEVLEVKIEIPQA.

The protein belongs to the MinE family.

Prevents the cell division inhibition by proteins MinC and MinD at internal division sites while permitting inhibition at polar sites. This ensures cell division at the proper site by restricting the formation of a division septum at the midpoint of the long axis of the cell. This is Cell division topological specificity factor from Ralstonia nicotianae (strain ATCC BAA-1114 / GMI1000) (Ralstonia solanacearum).